A 427-amino-acid polypeptide reads, in one-letter code: Peptidase B (427 aa).

Mn(2+)-binding residues include K195 and D200. K207 is an active-site residue. Mn(2+) contacts are provided by D218, D277, and E279. R281 is an active-site residue.

Belongs to the peptidase M17 family. In terms of assembly, homohexamer. Requires Mn(2+) as cofactor.

The protein resides in the cytoplasm. It catalyses the reaction Release of an N-terminal amino acid, Xaa, from a peptide or arylamide. Xaa is preferably Glu or Asp but may be other amino acids, including Leu, Met, His, Cys and Gln.. In terms of biological role, probably plays an important role in intracellular peptide degradation. The protein is Peptidase B of Escherichia coli O7:K1 (strain IAI39 / ExPEC).